The primary structure comprises 145 residues: Large-conductance mechanosensitive channel (145 aa).

2 helical membrane-spanning segments follow: residues 16–36 (VVDL…VTSF) and 83–103 (GVFI…FMVI).

The protein belongs to the MscL family. Homopentamer.

The protein localises to the cell inner membrane. Functionally, channel that opens in response to stretch forces in the membrane lipid bilayer. May participate in the regulation of osmotic pressure changes within the cell. The chain is Large-conductance mechanosensitive channel from Geobacter metallireducens (strain ATCC 53774 / DSM 7210 / GS-15).